The chain runs to 261 residues: Cytochrome c oxidase subunit 3 (261 aa).

Residues 1–15 are Mitochondrial matrix-facing; it reads MTHQTHAYHMVNPSP. A helical membrane pass occupies residues 16-34; it reads WPLTGAMSALLLTSGLIMW. Residues 35-40 lie on the Mitochondrial intermembrane side of the membrane; the sequence is FHFNSY. A helical transmembrane segment spans residues 41 to 66; it reads TLLLLGLLTNLISSYQWWRDIVREGT. The Mitochondrial matrix portion of the chain corresponds to 67 to 72; sequence YQGHHT. A helical membrane pass occupies residues 73–105; the sequence is KIVQKGLRYGMILFIISEVFFFLGFFWAFYHSS. Residues 106 to 128 lie on the Mitochondrial intermembrane side of the membrane; it reads LAPTPELGGCWPPTGISPLNPLE. A helical transmembrane segment spans residues 129-152; the sequence is VPLLNTSILLASGVSITWAHHSLM. The Mitochondrial matrix segment spans residues 153-155; it reads EGN. A helical transmembrane segment spans residues 156–183; the sequence is RKQMLQALTITIALGLYFTALQAMEYYE. Residues 184-190 are Mitochondrial intermembrane-facing; that stretch reads ASFTISD. A helical transmembrane segment spans residues 191 to 223; it reads GVYGSTFFVATGFHGLHVIIGTTFLITCLVRQT. The Mitochondrial matrix segment spans residues 224–232; that stretch reads LYHFTSNHH. The helical transmembrane segment at 233-256 threads the bilayer; it reads FGFEAAAWYWHFVDVVWLFLYVSI. The Mitochondrial intermembrane segment spans residues 257–261; sequence YWWGS.

Belongs to the cytochrome c oxidase subunit 3 family. Component of the cytochrome c oxidase (complex IV, CIV), a multisubunit enzyme composed of 14 subunits. The complex is composed of a catalytic core of 3 subunits MT-CO1, MT-CO2 and MT-CO3, encoded in the mitochondrial DNA, and 11 supernumerary subunits COX4I, COX5A, COX5B, COX6A, COX6B, COX6C, COX7A, COX7B, COX7C, COX8 and NDUFA4, which are encoded in the nuclear genome. The complex exists as a monomer or a dimer and forms supercomplexes (SCs) in the inner mitochondrial membrane with NADH-ubiquinone oxidoreductase (complex I, CI) and ubiquinol-cytochrome c oxidoreductase (cytochrome b-c1 complex, complex III, CIII), resulting in different assemblies (supercomplex SCI(1)III(2)IV(1) and megacomplex MCI(2)III(2)IV(2)).

The protein resides in the mitochondrion inner membrane. The enzyme catalyses 4 Fe(II)-[cytochrome c] + O2 + 8 H(+)(in) = 4 Fe(III)-[cytochrome c] + 2 H2O + 4 H(+)(out). Its function is as follows. Component of the cytochrome c oxidase, the last enzyme in the mitochondrial electron transport chain which drives oxidative phosphorylation. The respiratory chain contains 3 multisubunit complexes succinate dehydrogenase (complex II, CII), ubiquinol-cytochrome c oxidoreductase (cytochrome b-c1 complex, complex III, CIII) and cytochrome c oxidase (complex IV, CIV), that cooperate to transfer electrons derived from NADH and succinate to molecular oxygen, creating an electrochemical gradient over the inner membrane that drives transmembrane transport and the ATP synthase. Cytochrome c oxidase is the component of the respiratory chain that catalyzes the reduction of oxygen to water. Electrons originating from reduced cytochrome c in the intermembrane space (IMS) are transferred via the dinuclear copper A center (CU(A)) of subunit 2 and heme A of subunit 1 to the active site in subunit 1, a binuclear center (BNC) formed by heme A3 and copper B (CU(B)). The BNC reduces molecular oxygen to 2 water molecules using 4 electrons from cytochrome c in the IMS and 4 protons from the mitochondrial matrix. The protein is Cytochrome c oxidase subunit 3 (MT-CO3) of Ornithorhynchus anatinus (Duckbill platypus).